Reading from the N-terminus, the 169-residue chain is MIVGVGIDVLEVERVPEKFAERILGESEKRLFLTRKRRREFIAGRFALKEAFFKALGTGLNGHSFTDVEFLESNGKPVLCVHKDFGFFNYAHVSLSHDRFAVALVVLEKRKGDIIVEGDESFLRKRFEVLERSVEGWEIETSLPPFTLKKLLESSGCRLVRYGNILIGE.

D8 and E50 together coordinate Mg(2+).

Belongs to the P-Pant transferase superfamily. AcpS family. Requires Mg(2+) as cofactor.

The protein resides in the cytoplasm. The enzyme catalyses apo-[ACP] + CoA = holo-[ACP] + adenosine 3',5'-bisphosphate + H(+). Transfers the 4'-phosphopantetheine moiety from coenzyme A to a Ser of acyl-carrier-protein. In Thermotoga maritima (strain ATCC 43589 / DSM 3109 / JCM 10099 / NBRC 100826 / MSB8), this protein is Holo-[acyl-carrier-protein] synthase.